Consider the following 220-residue polypeptide: N-(5'-phosphoribosyl)anthranilate isomerase (220 aa).

It belongs to the TrpF family.

It catalyses the reaction N-(5-phospho-beta-D-ribosyl)anthranilate = 1-(2-carboxyphenylamino)-1-deoxy-D-ribulose 5-phosphate. It functions in the pathway amino-acid biosynthesis; L-tryptophan biosynthesis; L-tryptophan from chorismate: step 3/5. This is N-(5'-phosphoribosyl)anthranilate isomerase from Agrobacterium fabrum (strain C58 / ATCC 33970) (Agrobacterium tumefaciens (strain C58)).